A 326-amino-acid chain; its full sequence is Phosphate acyltransferase (326 aa).

This sequence belongs to the PlsX family. Homodimer. Probably interacts with PlsY.

Its subcellular location is the cytoplasm. The enzyme catalyses a fatty acyl-[ACP] + phosphate = an acyl phosphate + holo-[ACP]. Its pathway is lipid metabolism; phospholipid metabolism. Functionally, catalyzes the reversible formation of acyl-phosphate (acyl-PO(4)) from acyl-[acyl-carrier-protein] (acyl-ACP). This enzyme utilizes acyl-ACP as fatty acyl donor, but not acyl-CoA. The chain is Phosphate acyltransferase from Petrotoga mobilis (strain DSM 10674 / SJ95).